A 138-amino-acid polypeptide reads, in one-letter code: 1,4-dihydroxy-2-naphthoyl-CoA hydrolase (138 aa).

Asp16 is an active-site residue.

It belongs to the 4-hydroxybenzoyl-CoA thioesterase family. DHNA-CoA hydrolase subfamily.

The catalysed reaction is 1,4-dihydroxy-2-naphthoyl-CoA + H2O = 1,4-dihydroxy-2-naphthoate + CoA + H(+). Its pathway is cofactor biosynthesis; phylloquinone biosynthesis. The protein operates within quinol/quinone metabolism; 1,4-dihydroxy-2-naphthoate biosynthesis; 1,4-dihydroxy-2-naphthoate from chorismate: step 7/7. Its function is as follows. Catalyzes the specific hydrolysis of 1,4-dihydroxy-2-naphthoyl-CoA (DHNA-CoA) to 1,4-dihydroxy-2-naphthoate (DHNA), a reaction involved in phylloquinone (vitamin K1) biosynthesis. Is not active on benzoyl-CoA, phenylacetyl-CoA and aliphatic acyl-CoA thioesters. The polypeptide is 1,4-dihydroxy-2-naphthoyl-CoA hydrolase (Synechocystis sp. (strain ATCC 27184 / PCC 6803 / Kazusa)).